The primary structure comprises 274 residues: 2,3,4,5-tetrahydropyridine-2,6-dicarboxylate N-succinyltransferase (274 aa).

2 residues coordinate substrate: Arg-106 and Asp-143.

The protein belongs to the transferase hexapeptide repeat family. Homotrimer.

The protein localises to the cytoplasm. It carries out the reaction (S)-2,3,4,5-tetrahydrodipicolinate + succinyl-CoA + H2O = (S)-2-succinylamino-6-oxoheptanedioate + CoA. It participates in amino-acid biosynthesis; L-lysine biosynthesis via DAP pathway; LL-2,6-diaminopimelate from (S)-tetrahydrodipicolinate (succinylase route): step 1/3. The chain is 2,3,4,5-tetrahydropyridine-2,6-dicarboxylate N-succinyltransferase from Rickettsia conorii (strain ATCC VR-613 / Malish 7).